The chain runs to 206 residues: Holliday junction branch migration complex subunit RuvA (206 aa).

The segment at 1–64 (MIGRLHGIII…EDAQLLYGFN (64 aa)) is domain I. A domain II region spans residues 65 to 143 (TRQERTLFRE…GWISHDLFTP (79 aa)). A flexible linker region spans residues 144 to 157 (YTDAAPVDHEPSLA). The segment at 158–206 (PADTVESEAVAALLALGYKPQQASLVVSKVIKPEMTVENVIREALRSML) is domain III.

Belongs to the RuvA family. As to quaternary structure, homotetramer. Forms an RuvA(8)-RuvB(12)-Holliday junction (HJ) complex. HJ DNA is sandwiched between 2 RuvA tetramers; dsDNA enters through RuvA and exits via RuvB. An RuvB hexamer assembles on each DNA strand where it exits the tetramer. Each RuvB hexamer is contacted by two RuvA subunits (via domain III) on 2 adjacent RuvB subunits; this complex drives branch migration. In the full resolvosome a probable DNA-RuvA(4)-RuvB(12)-RuvC(2) complex forms which resolves the HJ.

It localises to the cytoplasm. Functionally, the RuvA-RuvB-RuvC complex processes Holliday junction (HJ) DNA during genetic recombination and DNA repair, while the RuvA-RuvB complex plays an important role in the rescue of blocked DNA replication forks via replication fork reversal (RFR). RuvA specifically binds to HJ cruciform DNA, conferring on it an open structure. The RuvB hexamer acts as an ATP-dependent pump, pulling dsDNA into and through the RuvAB complex. HJ branch migration allows RuvC to scan DNA until it finds its consensus sequence, where it cleaves and resolves the cruciform DNA. This Tolumonas auensis (strain DSM 9187 / NBRC 110442 / TA 4) protein is Holliday junction branch migration complex subunit RuvA.